The sequence spans 418 residues: Glutamyl-tRNA reductase (418 aa).

Residues 49–52, serine 109, 114–116, and glutamine 120 each bind substrate; these read TCNR and EPQ. The active-site Nucleophile is cysteine 50. 189-194 is a binding site for NADP(+); the sequence is GAGETI.

It belongs to the glutamyl-tRNA reductase family. Homodimer.

The catalysed reaction is (S)-4-amino-5-oxopentanoate + tRNA(Glu) + NADP(+) = L-glutamyl-tRNA(Glu) + NADPH + H(+). It functions in the pathway porphyrin-containing compound metabolism; protoporphyrin-IX biosynthesis; 5-aminolevulinate from L-glutamyl-tRNA(Glu): step 1/2. Functionally, catalyzes the NADPH-dependent reduction of glutamyl-tRNA(Glu) to glutamate 1-semialdehyde (GSA). This is Glutamyl-tRNA reductase from Citrobacter koseri (strain ATCC BAA-895 / CDC 4225-83 / SGSC4696).